A 68-amino-acid polypeptide reads, in one-letter code: Large ribosomal subunit protein uL29 (68 aa).

This sequence belongs to the universal ribosomal protein uL29 family.

This Maricaulis maris (strain MCS10) (Caulobacter maris) protein is Large ribosomal subunit protein uL29.